The chain runs to 238 residues: Lipoprotein-releasing system ATP-binding protein LolD (238 aa).

In terms of domain architecture, ABC transporter spans 6–238 (LVCQGIRKVY…RSSLAQEMEA (233 aa)). 42 to 49 (GSSGSGKS) is a binding site for ATP.

Belongs to the ABC transporter superfamily. Lipoprotein translocase (TC 3.A.1.125) family. In terms of assembly, the complex is composed of two ATP-binding proteins (LolD) and two transmembrane proteins (LolC and LolE).

It localises to the cell inner membrane. Functionally, part of the ABC transporter complex LolCDE involved in the translocation of mature outer membrane-directed lipoproteins, from the inner membrane to the periplasmic chaperone, LolA. Responsible for the formation of the LolA-lipoprotein complex in an ATP-dependent manner. This is Lipoprotein-releasing system ATP-binding protein LolD from Aliivibrio fischeri (strain ATCC 700601 / ES114) (Vibrio fischeri).